We begin with the raw amino-acid sequence, 336 residues long: UDP-N-acetylenolpyruvoylglucosamine reductase (336 aa).

Residues 17-188 enclose the FAD-binding PCMH-type domain; that stretch reads LRSLAERFVE…WDVTFRLPKK (172 aa). Arg164 is an active-site residue. Ser237 (proton donor) is an active-site residue. Glu332 is an active-site residue.

Belongs to the MurB family. FAD is required as a cofactor.

It localises to the cytoplasm. The catalysed reaction is UDP-N-acetyl-alpha-D-muramate + NADP(+) = UDP-N-acetyl-3-O-(1-carboxyvinyl)-alpha-D-glucosamine + NADPH + H(+). Its pathway is cell wall biogenesis; peptidoglycan biosynthesis. Cell wall formation. In Bdellovibrio bacteriovorus (strain ATCC 15356 / DSM 50701 / NCIMB 9529 / HD100), this protein is UDP-N-acetylenolpyruvoylglucosamine reductase.